The sequence spans 66 residues: Large ribosomal subunit protein eL24 (66 aa).

4 residues coordinate Zn(2+): Cys6, Cys9, Cys32, and Cys36. The C4-type zinc finger occupies 6 to 36; that stretch reads CSFCGKSIEPASGFLYVRKDGSVLNFCSRKC.

This sequence belongs to the eukaryotic ribosomal protein eL24 family. Part of the 50S ribosomal subunit. Forms a cluster with proteins L3 and L14. Zn(2+) serves as cofactor.

Binds to the 23S rRNA. In Picrophilus torridus (strain ATCC 700027 / DSM 9790 / JCM 10055 / NBRC 100828 / KAW 2/3), this protein is Large ribosomal subunit protein eL24.